A 338-amino-acid polypeptide reads, in one-letter code: DNA-directed RNA polymerase subunit alpha (338 aa).

Positions 1-225 (MLISQRPTIT…ELFGLARELN (225 aa)) are alpha N-terminal domain (alpha-NTD). The tract at residues 240–338 (TEYIAAYSMP…YIDVEAEDSE (99 aa)) is alpha C-terminal domain (alpha-CTD). The disordered stretch occupies residues 319–338 (LEGYDAETGGYIDVEAEDSE).

Belongs to the RNA polymerase alpha chain family. As to quaternary structure, homodimer. The RNAP catalytic core consists of 2 alpha, 1 beta, 1 beta' and 1 omega subunit. When a sigma factor is associated with the core the holoenzyme is formed, which can initiate transcription.

It catalyses the reaction RNA(n) + a ribonucleoside 5'-triphosphate = RNA(n+1) + diphosphate. Its function is as follows. DNA-dependent RNA polymerase catalyzes the transcription of DNA into RNA using the four ribonucleoside triphosphates as substrates. The sequence is that of DNA-directed RNA polymerase subunit alpha from Corynebacterium glutamicum (strain R).